A 700-amino-acid chain; its full sequence is Elongation factor G (700 aa).

The region spanning 8–290 is the tr-type G domain; that stretch reads ERYRNIGISA…AVVEYLPAPT (283 aa). GTP contacts are provided by residues 17-24, 88-92, and 142-145; these read AHIDAGKT, DTPGH, and NKMD.

This sequence belongs to the TRAFAC class translation factor GTPase superfamily. Classic translation factor GTPase family. EF-G/EF-2 subfamily.

It is found in the cytoplasm. Functionally, catalyzes the GTP-dependent ribosomal translocation step during translation elongation. During this step, the ribosome changes from the pre-translocational (PRE) to the post-translocational (POST) state as the newly formed A-site-bound peptidyl-tRNA and P-site-bound deacylated tRNA move to the P and E sites, respectively. Catalyzes the coordinated movement of the two tRNA molecules, the mRNA and conformational changes in the ribosome. In Haemophilus influenzae (strain PittEE), this protein is Elongation factor G.